The following is a 166-amino-acid chain: Regulatory protein RecX (166 aa).

Belongs to the RecX family.

It is found in the cytoplasm. Modulates RecA activity. The chain is Regulatory protein RecX from Klebsiella pneumoniae subsp. pneumoniae (strain ATCC 700721 / MGH 78578).